The following is a 280-amino-acid chain: Apoptosis regulator ced-9 (280 aa).

A disordered region spans residues 33–59; it reads GTEPTDFGINSDAQDLPSPSRQASTRR. The segment covering 43 to 59 has biased composition (polar residues); the sequence is SDAQDLPSPSRQASTRR. The BH4 motif lies at 80–99; the sequence is IEGFVVDYFTHRIRQNGMEW. The short motif at 160-179 is the BH1 element; it reads QTDQCPMSYGRLIGLISFGG. The BH2 motif lies at 213-229; it reads NWKEHNRSWDDFMTLGK.

This sequence belongs to the Bcl-2 family. Interacts with asymmetric homodimer ced-4; the interaction sequesters ced-4. Interacts with egl-1; the interaction results in ced-4 release. Interacts with dre-1; the interaction inhibits ced-9 activity, either directly or indirectly. Interacts with dct-1. May form a complex composed of ced-9, ced-4 and mac-1. Interacts with dynamin-related protein drp-1 (via residues 280-502); the interaction is enhanced by GTP rather than GDP; the interaction is probably direct and may occur at the mitochondrion. Interaction with drp-1 may be enhanced by interaction of ced-9 with egl-1, but not with ced-4. A ced-9/egl-1 complex may recruit drp-1 to the mitochondrial surface. Interacts with fzo-1; interaction may be suppressed by interaction of ced-9 with egl-1.

The protein localises to the perikaryon. Its subcellular location is the synapse. It is found in the endomembrane system. The protein resides in the mitochondrion membrane. It localises to the cytoplasm. Its function is as follows. Plays a major role in programmed cell death (PCD, apoptosis). egl-1 binds to and directly inhibits the activity of ced-9, releasing the cell death activator ced-4 from a ced-9/ced-4 containing protein complex and allowing ced-4 to activate the cell-killing caspase ced-3. During larval development, required for the elimination of transient presynaptic components downstream of egl-1 and upstream of ced-4 and ced-3 apoptotic pathway. Has been shown in one study to be dispensable in mitochondrial dynamics and morphology during early embryonic development. However, another study shows that a egl-1/ced-9 containing complex may promote drp-1-dependent mitochondrial fission. This Caenorhabditis elegans protein is Apoptosis regulator ced-9 (ced-9).